The sequence spans 620 residues: Glutathione-regulated potassium-efflux system protein KefC (620 aa).

The next 12 helical transmembrane spans lie at 4–24 (HTLIQALIYLGSAALIVPIAV), 26–46 (LGLGSVLGYLIAGCIIGPWGL), 54–74 (SILHFAEIGVVLMLFIIGLEL), 90–110 (GALQMVICGGLLGLFCMLLGL), 114–134 (VAELIGMTLALSSTAIAMQAM), 149–169 (FAVLLFQDIAAIPLVAMIPLL), 178–198 (MGAFALSALKVAGALVLVVLL), 218–238 (VFSAVALFLVFGFGLLLEEVG), 270–290 (GLLLGLFFIGVGMSIDFGTLL), 294–314 (LRIVILLLGFLIIKIAMLWLI), 327–347 (WFAVLLGQGSEFAFVVFGTAQ), and 359–379 (SLTLAVALSMAATPILLVILN). Positions 399–518 (QPRVIIAGFG…AGVEKPERET (120 aa)) constitute an RCK N-terminal domain. The tract at residues 597 to 620 (GWQGTEEGKHTGNMADEPETKPSS) is disordered.

It belongs to the monovalent cation:proton antiporter 2 (CPA2) transporter (TC 2.A.37) family. KefC subfamily. As to quaternary structure, homodimer. Interacts with the regulatory subunit KefF.

Its subcellular location is the cell inner membrane. Functionally, pore-forming subunit of a potassium efflux system that confers protection against electrophiles. Catalyzes K(+)/H(+) antiport. The chain is Glutathione-regulated potassium-efflux system protein KefC from Shigella sonnei (strain Ss046).